The sequence spans 173 residues: NADH-ubiquinone oxidoreductase chain 6 (173 aa).

The next 5 helical transmembrane spans lie at 1 to 21 (MTYFVLFLSLCFVLGGLAVAS), 27 to 47 (YGVVGLVLASVVGCGWLLSLG), 48 to 68 (VSFVSLVLFMVYLGGMLVVFV), 91 to 111 (GVSFVGVLVMGLVIGGFIGCL), and 139 to 159 (CGVGMFLVAGWGLLLTLFVVL).

The protein belongs to the complex I subunit 6 family.

It is found in the mitochondrion membrane. It catalyses the reaction a ubiquinone + NADH + 5 H(+)(in) = a ubiquinol + NAD(+) + 4 H(+)(out). Functionally, core subunit of the mitochondrial membrane respiratory chain NADH dehydrogenase (Complex I) that is believed to belong to the minimal assembly required for catalysis. Complex I functions in the transfer of electrons from NADH to the respiratory chain. The immediate electron acceptor for the enzyme is believed to be ubiquinone. The polypeptide is NADH-ubiquinone oxidoreductase chain 6 (MT-ND6) (Fratercula cirrhata (Tufted puffin)).